Consider the following 147-residue polypeptide: 3-dehydroquinate dehydratase (147 aa).

Tyrosine 23 acts as the Proton acceptor in catalysis. Substrate is bound by residues asparagine 74, histidine 80, and aspartate 87. The Proton donor role is filled by histidine 100. Substrate-binding positions include 101-102 (IS) and arginine 111.

Belongs to the type-II 3-dehydroquinase family. As to quaternary structure, homododecamer.

It carries out the reaction 3-dehydroquinate = 3-dehydroshikimate + H2O. It functions in the pathway metabolic intermediate biosynthesis; chorismate biosynthesis; chorismate from D-erythrose 4-phosphate and phosphoenolpyruvate: step 3/7. Functionally, catalyzes a trans-dehydration via an enolate intermediate. This is 3-dehydroquinate dehydratase from Prochlorococcus marinus (strain MIT 9215).